Consider the following 320-residue polypeptide: Ribosomal RNA small subunit methyltransferase H (320 aa).

S-adenosyl-L-methionine-binding positions include 42–44 (GGH), aspartate 62, phenylalanine 86, aspartate 108, and glutamine 115.

It belongs to the methyltransferase superfamily. RsmH family.

The protein resides in the cytoplasm. It catalyses the reaction cytidine(1402) in 16S rRNA + S-adenosyl-L-methionine = N(4)-methylcytidine(1402) in 16S rRNA + S-adenosyl-L-homocysteine + H(+). Functionally, specifically methylates the N4 position of cytidine in position 1402 (C1402) of 16S rRNA. The protein is Ribosomal RNA small subunit methyltransferase H of Yersinia pseudotuberculosis serotype O:1b (strain IP 31758).